Reading from the N-terminus, the 150-residue chain is L-alanine exporter AlaE (150 aa).

A run of 4 helical transmembrane segments spans residues 17–37 (FAMV…ISGM), 48–68 (LSIP…DFML), 86–106 (LVAY…VVGA), and 111–131 (IITA…FYGY).

It belongs to the AlaE exporter family.

It localises to the cell inner membrane. In terms of biological role, exports L-alanine. This chain is L-alanine exporter AlaE, found in Aliivibrio fischeri (strain ATCC 700601 / ES114) (Vibrio fischeri).